Reading from the N-terminus, the 246-residue chain is Uridylate kinase (246 aa).

19-22 (KISG) contributes to the ATP binding site. Glycine 61 contributes to the UMP binding site. ATP contacts are provided by glycine 62 and arginine 66. UMP-binding positions include aspartate 81 and 142-149 (TGNPFFTT). Threonine 169, glutamine 170, tyrosine 175, and aspartate 178 together coordinate ATP.

This sequence belongs to the UMP kinase family. Homohexamer.

It is found in the cytoplasm. It carries out the reaction UMP + ATP = UDP + ADP. It participates in pyrimidine metabolism; CTP biosynthesis via de novo pathway; UDP from UMP (UMPK route): step 1/1. Its activity is regulated as follows. Inhibited by UTP. Its function is as follows. Catalyzes the reversible phosphorylation of UMP to UDP. The chain is Uridylate kinase from Wolbachia sp. subsp. Brugia malayi (strain TRS).